Reading from the N-terminus, the 79-residue chain is Acyl carrier protein (79 aa).

Positions 2-77 (SDVAERVKKI…DAVNFLEKAT (76 aa)) constitute a Carrier domain. The residue at position 37 (serine 37) is an O-(pantetheine 4'-phosphoryl)serine.

The protein belongs to the acyl carrier protein (ACP) family. 4'-phosphopantetheine is transferred from CoA to a specific serine of apo-ACP by AcpS. This modification is essential for activity because fatty acids are bound in thioester linkage to the sulfhydryl of the prosthetic group.

The protein resides in the cytoplasm. It participates in lipid metabolism; fatty acid biosynthesis. Functionally, carrier of the growing fatty acid chain in fatty acid biosynthesis. The polypeptide is Acyl carrier protein (Methylocella silvestris (strain DSM 15510 / CIP 108128 / LMG 27833 / NCIMB 13906 / BL2)).